Consider the following 429-residue polypeptide: MSKSLQAIRGMNDILPEQTPLWRHFEGTVSRLLDNYGYRQIRMPVVEFTDLFKRSIGEVTDIVEKEMYTFADRNGDSLTLRPEGTAACVRAVLEHGITGGGQVQKLWYIGPMFRHERPQKGRYRQFHQIGVEVFNLDGPDIDAELIVMTWRLWGMLGIRNAVKLELNSLGTSEARARYRDALVEFLSAHLDQLDEDSQRRLKTNPLRVLDTKHPETQAVLVDAPKLADYLDDESRIHFEGLKARLDAAGIPYVINPKLVRGLDYYSKTVFEWVTDQLGAQGTVCAGGRYDGLVEQMGGKPTAGVGFAMGIERLVLLLETLEQVPEEIARQVDVYLCAFGEAAELAALALTEQVRDRLPNLRLQVNAGAGSFKSQFKKADKSGALYALILGEEELAAKIIGVKPLRGQGEQQNIAWDALSEHLASCVVQG.

This sequence belongs to the class-II aminoacyl-tRNA synthetase family. As to quaternary structure, homodimer.

The protein resides in the cytoplasm. The enzyme catalyses tRNA(His) + L-histidine + ATP = L-histidyl-tRNA(His) + AMP + diphosphate + H(+). The sequence is that of Histidine--tRNA ligase from Pseudomonas syringae pv. tomato (strain ATCC BAA-871 / DC3000).